Reading from the N-terminus, the 389-residue chain is Chalcone synthase (389 aa).

Cys164 is a catalytic residue.

This sequence belongs to the thiolase-like superfamily. Chalcone/stilbene synthases family.

It catalyses the reaction (E)-4-coumaroyl-CoA + 3 malonyl-CoA + 3 H(+) = 2',4,4',6'-tetrahydroxychalcone + 3 CO2 + 4 CoA. It participates in secondary metabolite biosynthesis; flavonoid biosynthesis. Functionally, the primary product of this enzyme is 4,2',4',6'-tetrahydroxychalcone (also termed naringenin-chalcone or chalcone) which can under specific conditions spontaneously isomerize into naringenin. In Pueraria montana var. lobata (Kudzu vine), this protein is Chalcone synthase (CHS).